A 308-amino-acid chain; its full sequence is Oxygen-dependent coproporphyrinogen-III oxidase (308 aa).

Ser-100 contributes to the substrate binding site. The a divalent metal cation site is built by His-104 and His-114. His-114 acts as the Proton donor in catalysis. 116-118 (NFR) contributes to the substrate binding site. A divalent metal cation-binding residues include His-153 and His-183. The tract at residues 248–283 (YVEFNLVFDRGTIFGLQSGGRTESILSSMPPIATWK) is important for dimerization. 266–268 (GGR) is a binding site for substrate.

Belongs to the aerobic coproporphyrinogen-III oxidase family. As to quaternary structure, homodimer. Requires a divalent metal cation as cofactor.

It localises to the cytoplasm. It carries out the reaction coproporphyrinogen III + O2 + 2 H(+) = protoporphyrinogen IX + 2 CO2 + 2 H2O. It functions in the pathway porphyrin-containing compound metabolism; protoporphyrin-IX biosynthesis; protoporphyrinogen-IX from coproporphyrinogen-III (O2 route): step 1/1. Involved in the heme biosynthesis. Catalyzes the aerobic oxidative decarboxylation of propionate groups of rings A and B of coproporphyrinogen-III to yield the vinyl groups in protoporphyrinogen-IX. In Francisella tularensis subsp. tularensis (strain FSC 198), this protein is Oxygen-dependent coproporphyrinogen-III oxidase.